The chain runs to 583 residues: Nuclear hormone receptor family member nhr-31 (583 aa).

Residues 43–77 (DLRTSGATSSSGPATSYIIRPSDKQPTVSSGGSQN) are disordered. The span at 46–58 (TSGATSSSGPATS) shows a compositional bias: low complexity. Positions 66 to 77 (KQPTVSSGGSQN) are enriched in polar residues. Positions 79-154 (DSVCAVCGDG…AGMDPKAVRP (76 aa)) form a DNA-binding region, nuclear receptor. 2 NR C4-type zinc fingers span residues 82–102 (CAVC…CYGC) and 118–142 (CRFS…FQRC). Residues 195-464 (ETRILLMQLM…DNLLAEMFGD (270 aa)) form the NR LBD domain.

The protein belongs to the nuclear hormone receptor family.

Its subcellular location is the nucleus. Functionally, orphan nuclear receptor. This is Nuclear hormone receptor family member nhr-31 (nhr-31) from Caenorhabditis elegans.